The sequence spans 113 residues: Thioredoxin H-type (113 aa).

One can recognise a Thioredoxin domain in the interval 2-112 (GGSVIVIDSK…LKALVAKHAA (111 aa)). Residues Cys-37 and Cys-40 each act as nucleophile in the active site. Cysteines 37 and 40 form a disulfide.

It belongs to the thioredoxin family. Plant H-type subfamily.

It is found in the cytoplasm. Functionally, participates in various redox reactions through the reversible oxidation of the active center dithiol to a disulfide. The H form is known to activate a number of cytosolic enzymes. In Chlamydomonas reinhardtii (Chlamydomonas smithii), this protein is Thioredoxin H-type (TRXH).